Consider the following 356-residue polypeptide: DNA polymerase IV (356 aa).

The region spanning 7-188 is the UmuC domain; that stretch reads IIHIDMDAFY…IPVTKFYGVG (182 aa). Mg(2+) is bound by residues aspartate 11 and aspartate 106. Glutamate 107 is a catalytic residue.

The protein belongs to the DNA polymerase type-Y family. In terms of assembly, monomer. The cofactor is Mg(2+).

It is found in the cytoplasm. It catalyses the reaction DNA(n) + a 2'-deoxyribonucleoside 5'-triphosphate = DNA(n+1) + diphosphate. Functionally, poorly processive, error-prone DNA polymerase involved in untargeted mutagenesis. Copies undamaged DNA at stalled replication forks, which arise in vivo from mismatched or misaligned primer ends. These misaligned primers can be extended by PolIV. Exhibits no 3'-5' exonuclease (proofreading) activity. May be involved in translesional synthesis, in conjunction with the beta clamp from PolIII. The polypeptide is DNA polymerase IV (Listeria monocytogenes serotype 4a (strain HCC23)).